Consider the following 302-residue polypeptide: Plant UBX domain-containing protein 3 (302 aa).

Disordered regions lie at residues 1–64 and 79–98; these read MSSK…PKHD and VEGP…TGRL. Positions 113 to 177 constitute an SEP domain; it reads PVIHNIIFWS…NLMRRDEKCP (65 aa). The UBX domain occupies 224–301; the sequence is ETLPSTSIQL…GLASSVVIQK (78 aa).

In terms of assembly, interacts with CDC48A.

This is Plant UBX domain-containing protein 3 from Arabidopsis thaliana (Mouse-ear cress).